The following is an 89-amino-acid chain: Small ribosomal subunit protein uS15 (89 aa).

It belongs to the universal ribosomal protein uS15 family. Part of the 30S ribosomal subunit. Forms a bridge to the 50S subunit in the 70S ribosome, contacting the 23S rRNA.

Its function is as follows. One of the primary rRNA binding proteins, it binds directly to 16S rRNA where it helps nucleate assembly of the platform of the 30S subunit by binding and bridging several RNA helices of the 16S rRNA. Functionally, forms an intersubunit bridge (bridge B4) with the 23S rRNA of the 50S subunit in the ribosome. The sequence is that of Small ribosomal subunit protein uS15 from Histophilus somni (strain 129Pt) (Haemophilus somnus).